Reading from the N-terminus, the 406-residue chain is Cysteine desulfurase (406 aa).

Lysine 226 carries the post-translational modification N6-(pyridoxal phosphate)lysine. Residue cysteine 364 is the Cysteine persulfide intermediate of the active site.

This sequence belongs to the class-V pyridoxal-phosphate-dependent aminotransferase family. Csd subfamily. Homodimer. Interacts with SufE and the SufBCD complex composed of SufB, SufC and SufD. The interaction with SufE is required to mediate the direct transfer of the sulfur atom from the S-sulfanylcysteine. Requires pyridoxal 5'-phosphate as cofactor.

It is found in the cytoplasm. It catalyses the reaction (sulfur carrier)-H + L-cysteine = (sulfur carrier)-SH + L-alanine. The catalysed reaction is L-selenocysteine + AH2 = hydrogenselenide + L-alanine + A + H(+). Its pathway is cofactor biosynthesis; iron-sulfur cluster biosynthesis. Cysteine desulfurases mobilize the sulfur from L-cysteine to yield L-alanine, an essential step in sulfur metabolism for biosynthesis of a variety of sulfur-containing biomolecules. Component of the suf operon, which is activated and required under specific conditions such as oxidative stress and iron limitation. Acts as a potent selenocysteine lyase in vitro, that mobilizes selenium from L-selenocysteine. Selenocysteine lyase activity is however unsure in vivo. The chain is Cysteine desulfurase from Yersinia pestis bv. Antiqua (strain Antiqua).